Here is a 252-residue protein sequence, read N- to C-terminus: Pyridoxine 5'-phosphate synthase (252 aa).

Asparagine 12 is a binding site for 3-amino-2-oxopropyl phosphate. Position 14–15 (14–15 (DH)) interacts with 1-deoxy-D-xylulose 5-phosphate. Arginine 23 serves as a coordination point for 3-amino-2-oxopropyl phosphate. Histidine 48 acts as the Proton acceptor in catalysis. 1-deoxy-D-xylulose 5-phosphate contacts are provided by arginine 50 and histidine 55. The active-site Proton acceptor is the glutamate 75. Threonine 105 is a 1-deoxy-D-xylulose 5-phosphate binding site. Catalysis depends on histidine 199, which acts as the Proton donor. 3-amino-2-oxopropyl phosphate-binding positions include glycine 200 and 221–222 (GH).

This sequence belongs to the PNP synthase family. In terms of assembly, homooctamer; tetramer of dimers.

Its subcellular location is the cytoplasm. It carries out the reaction 3-amino-2-oxopropyl phosphate + 1-deoxy-D-xylulose 5-phosphate = pyridoxine 5'-phosphate + phosphate + 2 H2O + H(+). The protein operates within cofactor biosynthesis; pyridoxine 5'-phosphate biosynthesis; pyridoxine 5'-phosphate from D-erythrose 4-phosphate: step 5/5. Functionally, catalyzes the complicated ring closure reaction between the two acyclic compounds 1-deoxy-D-xylulose-5-phosphate (DXP) and 3-amino-2-oxopropyl phosphate (1-amino-acetone-3-phosphate or AAP) to form pyridoxine 5'-phosphate (PNP) and inorganic phosphate. This is Pyridoxine 5'-phosphate synthase from Cereibacter sphaeroides (strain ATCC 17029 / ATH 2.4.9) (Rhodobacter sphaeroides).